The chain runs to 466 residues: A-type ATP synthase subunit B 2 (466 aa).

The protein belongs to the ATPase alpha/beta chains family. As to quaternary structure, has multiple subunits with at least A(3), B(3), C, D, E, F, H, I and proteolipid K(x).

The protein resides in the cell membrane. Its function is as follows. Component of the A-type ATP synthase that produces ATP from ADP in the presence of a proton gradient across the membrane. The B chain is a regulatory subunit. The sequence is that of A-type ATP synthase subunit B 2 from Methanospirillum hungatei JF-1 (strain ATCC 27890 / DSM 864 / NBRC 100397 / JF-1).